The following is a 252-amino-acid chain: Large ribosomal subunit protein uL4 (252 aa).

This sequence belongs to the universal ribosomal protein uL4 family. Part of the 50S ribosomal subunit.

Functionally, one of the primary rRNA binding proteins, this protein initially binds near the 5'-end of the 23S rRNA. It is important during the early stages of 50S assembly. It makes multiple contacts with different domains of the 23S rRNA in the assembled 50S subunit and ribosome. In terms of biological role, forms part of the polypeptide exit tunnel. The sequence is that of Large ribosomal subunit protein uL4 from Methanococcus maripaludis (strain C7 / ATCC BAA-1331).